The following is a 279-amino-acid chain: Ferredoxin-type protein NapG (279 aa).

A signal peptide (tat-type signal) is located at residues 1–50; the sequence is MKVRLKSKKKMKKPALNPERRKFLKEATRTAGGLAGVGILLGLQQNQSLA. 4 consecutive 4Fe-4S ferredoxin-type domains span residues 63-92, 100-132, 141-177, and 188-219; these read QDAK…LASL, TPYF…RQAT, LSVL…LETQ, and FIPT…ILPM. Residues Cys-72, Cys-75, Cys-78, Cys-82, Cys-110, Cys-113, Cys-118, Cys-122, Cys-150, Cys-158, Cys-161, Cys-165, Cys-197, Cys-200, Cys-203, and Cys-207 each coordinate [4Fe-4S] cluster.

[4Fe-4S] cluster serves as cofactor. In terms of processing, predicted to be exported by the Tat system. The position of the signal peptide cleavage has not been experimentally proven.

It is found in the periplasm. Functionally, required for electron transfer from ubiquinol, via NapC, to the periplasmic nitrate reductase NapAB complex. The sequence is that of Ferredoxin-type protein NapG (napG) from Haemophilus influenzae (strain ATCC 51907 / DSM 11121 / KW20 / Rd).